We begin with the raw amino-acid sequence, 124 residues long: uncharacterized protein (124 aa).

The N-terminal stretch at 1–21 (MFLLSLLHFFHPSLIPSLSLS) is a signal peptide.

This is an uncharacterized protein from Schizosaccharomyces pombe (strain 972 / ATCC 24843) (Fission yeast).